The sequence spans 306 residues: D-alanine--D-alanine ligase (306 aa).

The region spanning 102–300 (KIIAANAGVC…YGDIVQWMVE (199 aa)) is the ATP-grasp domain. ATP is bound at residue 128–183 (PMEPPYVIKPVCEGSSFGVVIVQENEAVPPHNIGGSEWGYADEVMVEKYIPGRELT). Mg(2+) contacts are provided by Asp-253, Glu-267, and Asn-269.

The protein belongs to the D-alanine--D-alanine ligase family. Mg(2+) serves as cofactor. It depends on Mn(2+) as a cofactor.

Its subcellular location is the cytoplasm. The enzyme catalyses 2 D-alanine + ATP = D-alanyl-D-alanine + ADP + phosphate + H(+). The protein operates within cell wall biogenesis; peptidoglycan biosynthesis. In terms of biological role, cell wall formation. This chain is D-alanine--D-alanine ligase, found in Bartonella tribocorum (strain CIP 105476 / IBS 506).